We begin with the raw amino-acid sequence, 267 residues long: Glucosamine-6-phosphate deaminase (267 aa).

Aspartate 71 serves as the catalytic Proton acceptor; for enolization step. The active-site For ring-opening step is aspartate 140. Catalysis depends on histidine 142, which acts as the Proton acceptor; for ring-opening step. The For ring-opening step role is filled by glutamate 147.

This sequence belongs to the glucosamine/galactosamine-6-phosphate isomerase family. As to quaternary structure, homohexamer.

It localises to the cytoplasm. It carries out the reaction alpha-D-glucosamine 6-phosphate + H2O = beta-D-fructose 6-phosphate + NH4(+). The protein operates within nucleotide-sugar biosynthesis; UDP-N-acetyl-alpha-D-glucosamine biosynthesis; alpha-D-glucosamine 6-phosphate from D-fructose 6-phosphate: step 1/1. Functionally, catalyzes the reversible conversion of alpha-D-glucosamine 6-phosphate (GlcN-6P) into beta-D-fructose 6-phosphate (Fru-6P) and ammonium ion, a regulatory reaction step in de novo uridine diphosphate-N-acetyl-alpha-D-glucosamine (UDP-GlcNAc) biosynthesis via hexosamine pathway. The polypeptide is Glucosamine-6-phosphate deaminase (Caenorhabditis elegans).